Here is a 100-residue protein sequence, read N- to C-terminus: Aspartyl/glutamyl-tRNA(Asn/Gln) amidotransferase subunit C (100 aa).

Belongs to the GatC family. Heterotrimer of A, B and C subunits.

It carries out the reaction L-glutamyl-tRNA(Gln) + L-glutamine + ATP + H2O = L-glutaminyl-tRNA(Gln) + L-glutamate + ADP + phosphate + H(+). The catalysed reaction is L-aspartyl-tRNA(Asn) + L-glutamine + ATP + H2O = L-asparaginyl-tRNA(Asn) + L-glutamate + ADP + phosphate + 2 H(+). Functionally, allows the formation of correctly charged Asn-tRNA(Asn) or Gln-tRNA(Gln) through the transamidation of misacylated Asp-tRNA(Asn) or Glu-tRNA(Gln) in organisms which lack either or both of asparaginyl-tRNA or glutaminyl-tRNA synthetases. The reaction takes place in the presence of glutamine and ATP through an activated phospho-Asp-tRNA(Asn) or phospho-Glu-tRNA(Gln). This is Aspartyl/glutamyl-tRNA(Asn/Gln) amidotransferase subunit C from Streptococcus thermophilus (strain ATCC BAA-491 / LMD-9).